Reading from the N-terminus, the 93-residue chain is Acylphosphatase (93 aa).

The Acylphosphatase-like domain maps to 5–93; sequence AKQIVVRGRV…PNFRGFQVTG (89 aa). Active-site residues include arginine 20 and asparagine 38.

It belongs to the acylphosphatase family.

It catalyses the reaction an acyl phosphate + H2O = a carboxylate + phosphate + H(+). The polypeptide is Acylphosphatase (acyP) (Lacticaseibacillus paracasei (strain ATCC 334 / BCRC 17002 / CCUG 31169 / CIP 107868 / KCTC 3260 / NRRL B-441) (Lactobacillus paracasei)).